Consider the following 145-residue polypeptide: Bacilliredoxin SAR1592 (145 aa).

Belongs to the bacilliredoxin family.

The polypeptide is Bacilliredoxin SAR1592 (Staphylococcus aureus (strain MRSA252)).